The sequence spans 295 residues: Foldase protein PrsA (295 aa).

The N-terminal stretch at 1–19 (MKKVLIGFASIAMAFTLAA) is a signal peptide. Cysteine 20 is lipidated: N-palmitoyl cysteine. Cysteine 20 is lipidated: S-diacylglycerol cysteine. Residues 136–229 (EPKVTVAQIL…YGYQVIKMIN (94 aa)) form the PpiC domain.

Belongs to the PrsA family.

The protein localises to the cell membrane. The catalysed reaction is [protein]-peptidylproline (omega=180) = [protein]-peptidylproline (omega=0). Functionally, plays a major role in protein secretion by helping the post-translocational extracellular folding of several secreted proteins. In Pediococcus pentosaceus (strain ATCC 25745 / CCUG 21536 / LMG 10740 / 183-1w), this protein is Foldase protein PrsA.